The following is a 317-amino-acid chain: Probable cell division protein WhiA (317 aa).

A DNA-binding region (H-T-H motif) is located at residues 275–308; that stretch reads SLKELGEMLVPKVGKSGVNHRMRKIDELAEKLEE.

The protein belongs to the WhiA family.

Functionally, involved in cell division and chromosome segregation. This is Probable cell division protein WhiA from Desulfitobacterium hafniense (strain DSM 10664 / DCB-2).